Here is a 607-residue protein sequence, read N- to C-terminus: Dihydroxy-acid dehydratase (607 aa).

A Mg(2+)-binding site is contributed by D81. Residue C122 participates in [2Fe-2S] cluster binding. 2 residues coordinate Mg(2+): D123 and K124. The residue at position 124 (K124) is an N6-carboxylysine. C195 is a binding site for [2Fe-2S] cluster. Mg(2+) is bound at residue E489. S515 serves as the catalytic Proton acceptor.

Belongs to the IlvD/Edd family. Homodimer. [2Fe-2S] cluster serves as cofactor. It depends on Mg(2+) as a cofactor.

The catalysed reaction is (2R)-2,3-dihydroxy-3-methylbutanoate = 3-methyl-2-oxobutanoate + H2O. It catalyses the reaction (2R,3R)-2,3-dihydroxy-3-methylpentanoate = (S)-3-methyl-2-oxopentanoate + H2O. It functions in the pathway amino-acid biosynthesis; L-isoleucine biosynthesis; L-isoleucine from 2-oxobutanoate: step 3/4. Its pathway is amino-acid biosynthesis; L-valine biosynthesis; L-valine from pyruvate: step 3/4. Functionally, functions in the biosynthesis of branched-chain amino acids. Catalyzes the dehydration of (2R,3R)-2,3-dihydroxy-3-methylpentanoate (2,3-dihydroxy-3-methylvalerate) into 2-oxo-3-methylpentanoate (2-oxo-3-methylvalerate) and of (2R)-2,3-dihydroxy-3-methylbutanoate (2,3-dihydroxyisovalerate) into 2-oxo-3-methylbutanoate (2-oxoisovalerate), the penultimate precursor to L-isoleucine and L-valine, respectively. The polypeptide is Dihydroxy-acid dehydratase (Deinococcus radiodurans (strain ATCC 13939 / DSM 20539 / JCM 16871 / CCUG 27074 / LMG 4051 / NBRC 15346 / NCIMB 9279 / VKM B-1422 / R1)).